Consider the following 312-residue polypeptide: Very long chain fatty acid elongase 4 (312 aa).

Residue Asn-20 is glycosylated (N-linked (GlcNAc...) asparagine). The next 7 membrane-spanning stretches (helical) occupy residues 42-62, 78-98, 127-147, 165-185, 188-208, 217-237, and 246-266; these read LMQS…FVWL, VLII…RELF, ALWW…FFIL, MFTL…FFGA, NSFI…GPWI, YLTM…ALSL, and WMHW…LNFY. Over residues 273-292 the composition is skewed to polar residues; sequence PKQSKTGKTATNGISSNGVN. Residues 273 to 312 form a disordered region; that stretch reads PKQSKTGKTATNGISSNGVNKSEKALENGKPQKNGKPKGE. N-linked (GlcNAc...) asparagine glycosylation occurs at Asn-292. The short motif at 308-312 is the Di-lysine motif element; the sequence is KPKGE.

This sequence belongs to the ELO family. ELOVL4 subfamily. In terms of assembly, oligomer. Post-translationally, N-glycosylated. In terms of tissue distribution, expressed in the retina, exclusively in photoreceptor cells and in the brain, skin, testis and lens.

It is found in the endoplasmic reticulum membrane. The catalysed reaction is a very-long-chain acyl-CoA + malonyl-CoA + H(+) = a very-long-chain 3-oxoacyl-CoA + CO2 + CoA. It carries out the reaction hexacosanoyl-CoA + malonyl-CoA + H(+) = 3-oxooctacosanyol-CoA + CO2 + CoA. It catalyses the reaction octacosanoyl-CoA + malonyl-CoA + H(+) = 3-oxo-triacontanoyl-CoA + CO2 + CoA. The enzyme catalyses triacontanoyl-CoA + malonyl-CoA + H(+) = 3-oxo-dotriacontanoyl-CoA + CO2 + CoA. The catalysed reaction is (19Z,22Z,25Z,28Z,31Z)-tetratriacontapentaenoyl-CoA + malonyl-CoA + H(+) = 3-oxo-(21Z,24Z,27Z,30Z,33Z)-hexatriacontapentaenoyl-CoA + CO2 + CoA. It carries out the reaction (4Z,7Z,10Z,13Z,16Z,19Z)-docosahexaenoyl-CoA + malonyl-CoA + H(+) = 3-oxo-(6Z,9Z,12Z,15Z,18Z,21Z)-tetracosahexaenoyl-CoA + CO2 + CoA. It catalyses the reaction (7Z,10Z,13Z,16Z)-docosatetraenoyl-CoA + malonyl-CoA + H(+) = (9Z,12Z,15Z,18Z)-3-oxotetracosatetraenoyl-CoA + CO2 + CoA. The enzyme catalyses (11Z,14Z,17Z,20Z,23Z)-hexacosapentaenoyl-CoA + malonyl-CoA + H(+) = 3-oxo-(13Z,16Z,19Z,22Z,25Z)-octacosapentaenoyl-CoA + CO2 + CoA. The catalysed reaction is (13Z,16Z,19Z,22Z,25Z)-octacosapentaenoyl-CoA + malonyl-CoA + H(+) = 3-oxo-(15Z,18Z,21Z,24Z,27Z)-triacontapentaenoyl-CoA + CO2 + CoA. It carries out the reaction (15Z,18Z,21Z,24Z,27Z)-triacontapentaenoyl-CoA + malonyl-CoA + H(+) = 3-oxo-(17Z,20Z,23Z,26Z,29Z)-dotriacontapentaenoyl-CoA + CO2 + CoA. It catalyses the reaction (17Z,20Z,23Z,26Z,29Z)-dotriacontapentaenoyl-CoA + malonyl-CoA + H(+) = 3-oxo-(19Z,22Z,25Z,28Z,31Z)-tetratriacontapentaenoyl-CoA + CO2 + CoA. The enzyme catalyses (21Z,24Z,27Z,30Z,33Z)-hexatriacontapentaenoyl-CoA + malonyl-CoA + H(+) = 3-oxo-(23Z,26Z,29Z,32Z,35Z)-octatriacontapentaenoyl-CoA + CO2 + CoA. The catalysed reaction is (11Z,14Z,17Z,20Z)-hexacosatetraenoyl-CoA + malonyl-CoA + H(+) = (13Z,16Z,19Z,22Z)-3-oxooctacosatetraenoyl-CoA + CO2 + CoA. It carries out the reaction (13Z,16Z,19Z,22Z)-octacosatetraenoyl-CoA + malonyl-CoA + H(+) = 3-oxo-(15Z,18Z,21Z,24Z)-triacontatetraenoyl-CoA + CO2 + CoA. It catalyses the reaction (15Z,18Z,21Z,24Z)-triacontatetraenoyl-CoA + malonyl-CoA + H(+) = 3-oxo-(17Z,20Z,23Z,26Z)-dotriacontatetraenoyl-CoA + CO2 + CoA. The enzyme catalyses (17Z,20Z,23Z,26Z)-dotriacontatetraenoyl-CoA + malonyl-CoA + H(+) = 3-oxo-(19Z,22Z,25Z,28Z)-tetratriacontatetraenoyl-CoA + CO2 + CoA. The catalysed reaction is (19Z,22Z,25Z,28Z)-tetratriacontatetraenoyl-CoA + malonyl-CoA + H(+) = 3-oxo-(21Z,24Z,27Z,30Z)-hexatriacontatetraenoyl-CoA + CO2 + CoA. It carries out the reaction (21Z,24Z,27Z,30Z)-hexatriacontatetraenoyl-CoA + malonyl-CoA + H(+) = 3-oxo-(23Z,26Z,29Z,32Z)-octatriacontatetraenoyl-CoA + CO2 + CoA. It catalyses the reaction (6Z,9Z,12Z,15Z,18Z,21Z)-tetracosahexaenoyl-CoA + malonyl-CoA + H(+) = 3-oxo-(8Z,11Z,14Z,17Z,20Z,23Z)-hexacosahexaenoyl-CoA + CO2 + CoA. The enzyme catalyses (8Z,11Z,14Z,17Z,20Z,23Z)-hexacosahexaenoyl-CoA + malonyl-CoA + H(+) = 3-oxo-(10Z,13Z,16Z,19Z,22Z,25Z)-octacosahexaenoyl-CoA + CO2 + CoA. The catalysed reaction is (10Z,13Z,16Z,19Z,22Z,25Z)-octacosahexaenoyl-CoA + malonyl-CoA + H(+) = 3-oxo-(12Z,15Z,18Z,21Z,24Z,27Z)-triacontahexaenoyl-CoA + CO2 + CoA. It carries out the reaction (12Z,15Z,18Z,21Z,24Z,27Z)-triacontahexaenoyl-CoA + malonyl-CoA + H(+) = 3-oxo-(14Z,17Z,20Z,23Z,26Z,29Z)-dotriacontahexaenoyl-CoA + CO2 + CoA. It catalyses the reaction (14Z,17Z,20Z,23Z,26Z,29Z)-dotriacontahexaenoyl-CoA + malonyl-CoA + H(+) = 3-oxo-(16Z,19Z,22Z,25Z,28Z,31Z)-tetratriacontahexaenoyl-CoA + CO2 + CoA. The enzyme catalyses (16Z,19Z,22Z,25Z,28Z,31Z)-tetratriacontahexaenoyl-CoA + malonyl-CoA + H(+) = 3-oxo-(18Z,21Z,24Z,27Z,30Z,33Z)-hexatriacontahexaenoyl-CoA + CO2 + CoA. The catalysed reaction is (9Z,12Z,15Z,18Z,21Z)-tetracosapentaenoyl-CoA + malonyl-CoA + H(+) = 3-oxo-(11Z,14Z,17Z,20Z,23Z)-hexacosapentaenoyl-CoA + CO2 + CoA. It functions in the pathway lipid metabolism; fatty acid biosynthesis. Functionally, catalyzes the first and rate-limiting reaction of the four reactions that constitute the long-chain fatty acids elongation cycle. This endoplasmic reticulum-bound enzymatic process allows the addition of 2 carbons to the chain of long- and very long-chain fatty acids (VLCFAs) per cycle. Condensing enzyme that catalyzes the synthesis of very long chain saturated (VLC-SFA) and polyunsaturated (PUFA) fatty acids that are involved in multiple biological processes as precursors of membrane lipids and lipid mediators. May play a critical role in early brain and skin development. The protein is Very long chain fatty acid elongase 4 of Mus musculus (Mouse).